The chain runs to 217 residues: Protein MODIFYING WALL LIGNIN-2 (217 aa).

A signal peptide spans 1–23; the sequence is MHNLFLYSVVFSLGLVSFITCFA. Residues 24–51 lie on the Cytoplasmic side of the membrane; that stretch reads AEFKRTQKEDIRWDTERNCYVPGSHAFG. A helical transmembrane segment spans residues 52–72; it reads LGSAAVLCFCLAQIVGNIVVF. Residues 73-94 lie on the Extracellular side of the membrane; it reads RNHRTRTKREDGYKITDLTLPT. A helical membrane pass occupies residues 95 to 115; it reads VLLLLSWSNFVVVVLILSTAI. Over 116–137 the chain is Cytoplasmic; it reads SMSRAQAYGEGWLDEDCYLVKD. The chain crosses the membrane as a helical span at residues 138-158; the sequence is GVFAASGCLAILGLGALTISA. Topologically, residues 159-217 are extracellular; sequence TRIKVKKQQQLVQVVIKDQNQDQRRSMEEEQKHDEHQTNKSESVIHLVEEVSSTNISRI. N197 and N213 each carry an N-linked (GlcNAc...) asparagine glycan.

Belongs to the DESIGUAL family.

It localises to the cell membrane. In terms of biological role, together with MWL1, contributes to secondary cell wall biology, specifically lignin biosynthesis. This Arabidopsis thaliana (Mouse-ear cress) protein is Protein MODIFYING WALL LIGNIN-2.